A 320-amino-acid chain; its full sequence is HPr kinase/phosphorylase (320 aa).

Residues His141 and Lys162 contribute to the active site. An ATP-binding site is contributed by 156–163 (GHSGLGKS). Ser163 contributes to the Mg(2+) binding site. Asp180 functions as the Proton acceptor; for phosphorylation activity. Proton donor; for dephosphorylation activity in the catalytic mechanism. The tract at residues 204-213 (LEVRGLGILN) is important for the catalytic mechanism of both phosphorylation and dephosphorylation. Glu205 contacts Mg(2+). The active site involves Arg248. Positions 269-274 (PVAVGR) are important for the catalytic mechanism of dephosphorylation.

This sequence belongs to the HPrK/P family. As to quaternary structure, homohexamer. Mg(2+) is required as a cofactor.

It carries out the reaction [HPr protein]-L-serine + ATP = [HPr protein]-O-phospho-L-serine + ADP + H(+). It catalyses the reaction [HPr protein]-O-phospho-L-serine + phosphate + H(+) = [HPr protein]-L-serine + diphosphate. In terms of biological role, catalyzes the ATP- as well as the pyrophosphate-dependent phosphorylation of a specific serine residue in HPr, a phosphocarrier protein of the phosphoenolpyruvate-dependent sugar phosphotransferase system (PTS). HprK/P also catalyzes the pyrophosphate-producing, inorganic phosphate-dependent dephosphorylation (phosphorolysis) of seryl-phosphorylated HPr (P-Ser-HPr). The sequence is that of HPr kinase/phosphorylase from Neisseria gonorrhoeae (strain ATCC 700825 / FA 1090).